The primary structure comprises 357 residues: MKFVDEAEIQVIAGNGGDGCVSFRREKFIPLGGPDGGDGGDGGSVWLVADENLNTLVDFRHERIFKAQRGVNGMGQQMYGKAGQDKIISVPIGTVVINVQTDEVIGDMVRHGDRLLVAKGGTGGLGNMHFKSSINRAPRQARPGELGEERTLKLELKLLADIGMLGFPNVGKSTFIRAVSAATPKVADYPFTTLYPNLGVVKIEAYSSFVIADVPGLIEGAADGVGLGTQFLRHLQRTKLLLHMVDISATADAYGNEKVGVGLLPIEQVRKLEIELERHDPALLDKPRWLVLNKADLMPQEDAQDLAEALIAELHWTAPWYLVSAVSREGTWPIMKSAMTLFEHQREVAAEQSVSSR.

The region spanning 1 to 159 is the Obg domain; it reads MKFVDEAEIQ…RTLKLELKLL (159 aa). The OBG-type G domain maps to 160–343; sequence ADIGMLGFPN…IMKSAMTLFE (184 aa). Residues 166-173, 191-195, 213-216, 293-296, and 324-326 contribute to the GTP site; these read GFPNVGKS, FTTLY, DVPG, NKAD, and SAV. Mg(2+) is bound by residues S173 and T193.

Belongs to the TRAFAC class OBG-HflX-like GTPase superfamily. OBG GTPase family. In terms of assembly, monomer. Mg(2+) serves as cofactor.

It is found in the cytoplasm. In terms of biological role, an essential GTPase which binds GTP, GDP and possibly (p)ppGpp with moderate affinity, with high nucleotide exchange rates and a fairly low GTP hydrolysis rate. Plays a role in control of the cell cycle, stress response, ribosome biogenesis and in those bacteria that undergo differentiation, in morphogenesis control. This is GTPase Obg from Xylella fastidiosa (strain M12).